The sequence spans 552 residues: Rqc2 homolog RqcH (552 aa).

2 coiled-coil regions span residues 271–317 and 357–398; these read RDRV…QKGE and NAQR…MLGQ.

It belongs to the NEMF family. As to quaternary structure, associates with stalled 50S ribosomal subunits, binds to RqcH. Recombinant protein interacts with the N-terminal 30 kDa of human fibronectin (FN1).

Its function is as follows. Key component of the ribosome quality control system (RQC), a ribosome-associated complex that mediates the extraction of incompletely synthesized nascent chains from stalled ribosomes and their subsequent degradation. RqcH recruits Ala-charged tRNA, and with RqcP directs the elongation of stalled nascent chains on 50S ribosomal subunits, leading to non-templated C-terminal alanine extensions (Ala tail). The Ala tail promotes nascent chain degradation. May add between 1 and at least 8 Ala residues. Binds to stalled 50S ribosomal subunits. In Streptococcus suis (strain 05ZYH33), this protein is Rqc2 homolog RqcH.